Here is a 1026-residue protein sequence, read N- to C-terminus: Translation initiation factor IF-2, chloroplastic (1026 aa).

Residues 1 to 63 (MPSMLVLVGT…KKWLCRYSVS (63 aa)) constitute a chloroplast transit peptide. The span at 158 to 173 (AEKLEIPKPGNKEGGE) shows a compositional bias: basic and acidic residues. Disordered regions lie at residues 158–208 (AEKL…TMKS), 230–284 (FNRG…PPVK), and 300–393 (VSEE…KWSK). Over residues 178 to 194 (SQPSANSSNSRNGSYAN) the composition is skewed to polar residues. Pro residues predominate over residues 254–269 (LAPPQPPFRPQPPVRP). Residues 306-317 (SSVKSKERKPIL) are compositionally biased toward basic and acidic residues. Positions 384–393 (SGRKGRKWSK) are enriched in basic residues. The 174-residue stretch at 499–672 (DRPPVITIMG…MLVAELQELK (174 aa)) folds into the tr-type G domain. The G1 stretch occupies residues 508–515 (GHVDHGKT). 508–515 (GHVDHGKT) contributes to the GTP binding site. The G2 stretch occupies residues 533–537 (GITQG). Positions 558–561 (DTPG) are G3. GTP contacts are provided by residues 558 to 562 (DTPGH) and 612 to 615 (NKID). Residues 612-615 (NKID) are G4. Residues 648–650 (SAL) are G5.

The protein belongs to the TRAFAC class translation factor GTPase superfamily. Classic translation factor GTPase family. IF-2 subfamily.

The protein resides in the plastid. Its subcellular location is the chloroplast. In terms of biological role, one of the essential components for the initiation of protein synthesis. Protects formylmethionyl-tRNA from spontaneous hydrolysis and promotes its binding to the 30S ribosomal subunits. Also involved in the hydrolysis of GTP during the formation of the 70S ribosomal complex. The sequence is that of Translation initiation factor IF-2, chloroplastic from Arabidopsis thaliana (Mouse-ear cress).